Reading from the N-terminus, the 329-residue chain is Ketol-acid reductoisomerase (NADP(+)) (329 aa).

Residues 2–182 (TQLFYDTDAD…GGTRAGILET (181 aa)) form the KARI N-terminal Rossmann domain. NADP(+)-binding positions include 25–28 (YGSQ), serine 51, serine 53, and 83–86 (DEFQ). Residue histidine 108 is part of the active site. Residue glycine 134 participates in NADP(+) binding. One can recognise a KARI C-terminal knotted domain in the interval 183 to 328 (NFKEETETDL…KGLRAMFSWL (146 aa)). Positions 191, 195, 227, and 231 each coordinate Mg(2+). Position 252 (serine 252) interacts with substrate.

Belongs to the ketol-acid reductoisomerase family. Requires Mg(2+) as cofactor.

The catalysed reaction is (2R)-2,3-dihydroxy-3-methylbutanoate + NADP(+) = (2S)-2-acetolactate + NADPH + H(+). It catalyses the reaction (2R,3R)-2,3-dihydroxy-3-methylpentanoate + NADP(+) = (S)-2-ethyl-2-hydroxy-3-oxobutanoate + NADPH + H(+). It participates in amino-acid biosynthesis; L-isoleucine biosynthesis; L-isoleucine from 2-oxobutanoate: step 2/4. Its pathway is amino-acid biosynthesis; L-valine biosynthesis; L-valine from pyruvate: step 2/4. Functionally, involved in the biosynthesis of branched-chain amino acids (BCAA). Catalyzes an alkyl-migration followed by a ketol-acid reduction of (S)-2-acetolactate (S2AL) to yield (R)-2,3-dihydroxy-isovalerate. In the isomerase reaction, S2AL is rearranged via a Mg-dependent methyl migration to produce 3-hydroxy-3-methyl-2-ketobutyrate (HMKB). In the reductase reaction, this 2-ketoacid undergoes a metal-dependent reduction by NADPH to yield (R)-2,3-dihydroxy-isovalerate. The protein is Ketol-acid reductoisomerase (NADP(+)) of Prochlorococcus marinus subsp. pastoris (strain CCMP1986 / NIES-2087 / MED4).